We begin with the raw amino-acid sequence, 315 residues long: DNA-directed RNA polymerase subunit alpha (315 aa).

The alpha N-terminal domain (alpha-NTD) stretch occupies residues 1 to 228 (MLEIEKPIIE…EHFKLFMSLT (228 aa)). The alpha C-terminal domain (alpha-CTD) stretch occupies residues 245–315 (KEKVLEMTVE…LGLCLKLNDE (71 aa)).

It belongs to the RNA polymerase alpha chain family. As to quaternary structure, homodimer. The RNAP catalytic core consists of 2 alpha, 1 beta, 1 beta' and 1 omega subunit. When a sigma factor is associated with the core the holoenzyme is formed, which can initiate transcription.

The catalysed reaction is RNA(n) + a ribonucleoside 5'-triphosphate = RNA(n+1) + diphosphate. Functionally, DNA-dependent RNA polymerase catalyzes the transcription of DNA into RNA using the four ribonucleoside triphosphates as substrates. This Clostridium botulinum (strain Alaska E43 / Type E3) protein is DNA-directed RNA polymerase subunit alpha.